Here is a 37-residue protein sequence, read N- to C-terminus: MKVRPSVKKMCEKCRVIKRHGKIMVICQNPKHKQRQG.

It belongs to the bacterial ribosomal protein bL36 family.

The protein localises to the plastid. Its subcellular location is the chloroplast. This Thalassiosira pseudonana (Marine diatom) protein is Large ribosomal subunit protein bL36c.